A 509-amino-acid polypeptide reads, in one-letter code: ATP synthase subunit alpha (509 aa).

Residue 169–176 (GDRQTGKT) participates in ATP binding.

This sequence belongs to the ATPase alpha/beta chains family. F-type ATPases have 2 components, CF(1) - the catalytic core - and CF(0) - the membrane proton channel. CF(1) has five subunits: alpha(3), beta(3), gamma(1), delta(1), epsilon(1). CF(0) has three main subunits: a(1), b(2) and c(9-12). The alpha and beta chains form an alternating ring which encloses part of the gamma chain. CF(1) is attached to CF(0) by a central stalk formed by the gamma and epsilon chains, while a peripheral stalk is formed by the delta and b chains.

It is found in the cell inner membrane. The catalysed reaction is ATP + H2O + 4 H(+)(in) = ADP + phosphate + 5 H(+)(out). Its function is as follows. Produces ATP from ADP in the presence of a proton gradient across the membrane. The alpha chain is a regulatory subunit. The protein is ATP synthase subunit alpha of Sinorhizobium fredii (strain NBRC 101917 / NGR234).